Reading from the N-terminus, the 98-residue chain is Aspartyl/glutamyl-tRNA(Asn/Gln) amidotransferase subunit C (98 aa).

The tract at residues 75–98 (AQALSGAPAQEQQRFKVPQILGED) is disordered.

This sequence belongs to the GatC family. In terms of assembly, heterotrimer of A, B and C subunits.

The catalysed reaction is L-glutamyl-tRNA(Gln) + L-glutamine + ATP + H2O = L-glutaminyl-tRNA(Gln) + L-glutamate + ADP + phosphate + H(+). It carries out the reaction L-aspartyl-tRNA(Asn) + L-glutamine + ATP + H2O = L-asparaginyl-tRNA(Asn) + L-glutamate + ADP + phosphate + 2 H(+). Allows the formation of correctly charged Asn-tRNA(Asn) or Gln-tRNA(Gln) through the transamidation of misacylated Asp-tRNA(Asn) or Glu-tRNA(Gln) in organisms which lack either or both of asparaginyl-tRNA or glutaminyl-tRNA synthetases. The reaction takes place in the presence of glutamine and ATP through an activated phospho-Asp-tRNA(Asn) or phospho-Glu-tRNA(Gln). The polypeptide is Aspartyl/glutamyl-tRNA(Asn/Gln) amidotransferase subunit C (Streptomyces griseus subsp. griseus (strain JCM 4626 / CBS 651.72 / NBRC 13350 / KCC S-0626 / ISP 5235)).